We begin with the raw amino-acid sequence, 395 residues long: Chalcone synthase (395 aa).

The active site involves cysteine 169.

Belongs to the thiolase-like superfamily. Chalcone/stilbene synthases family.

The catalysed reaction is (E)-4-coumaroyl-CoA + 3 malonyl-CoA + 3 H(+) = 2',4,4',6'-tetrahydroxychalcone + 3 CO2 + 4 CoA. The protein operates within secondary metabolite biosynthesis; flavonoid biosynthesis. Its function is as follows. The primary product of this enzyme is 4,2',4',6'-tetrahydroxychalcone (also termed naringenin-chalcone or chalcone) which can under specific conditions spontaneously isomerize into naringenin. This chain is Chalcone synthase (CHS), found in Pinus strobus (Eastern white pine).